Here is a 117-residue protein sequence, read N- to C-terminus: Photosystem II reaction center Psb28 protein (117 aa).

The protein belongs to the Psb28 family. In terms of assembly, part of the photosystem II complex.

Its subcellular location is the cellular thylakoid membrane. In Prochlorococcus marinus (strain MIT 9301), this protein is Photosystem II reaction center Psb28 protein.